The sequence spans 522 residues: MLNEILSGSSAAVISGLVGFYISKKITNANFDIYVEKAKAQAGAIENEAQLLLYKANIKSQEIEQEATKLYENAKDRAKADLSLREEDVNRKEQTFKRYKQNEERRLQDEVSTLKARQVDLKRNEKSLSSLKKRYEDKIDEALNAIEHCAGMTKEEATRVLLEKVEEKSRSEIAHVVRRYENEAKVEAKKRANYILAQATSRFAGEFAAERLTNLVHLNDDELKGRIIGKEGRNIKTLETLLGVDIIIDDTPNAILVSSFNLYRRAIATKTLELLIQDGRIQPARIEEIYNKVCEDFEADTLSEGEEIVIDLDIGVMHPELVKLIGKLRYRASYGQNALSHTLEVAHLAGIMASEMGGDARLAKRAGLLHDIGKALTHEHEGSHVDLGVQVCNRYNEHSVVINAIYAHHGHEEINSIECGAVCAADALSAARPGARREVLESFLKRVTAIEEIASQHSGVKQAYAINAGREVRVIVNASLINDDESILLAKEIASEIEHGVQYPGEIKVNVIRESRAVEFAK.

A helical membrane pass occupies residues 7 to 23 (SGSSAAVISGLVGFYIS). In terms of domain architecture, KH spans 212 to 278 (LTNLVHLNDD…TKTLELLIQD (67 aa)). Residues 338–431 (ALSHTLEVAH…VCAADALSAA (94 aa)) form the HD domain.

This sequence belongs to the RNase Y family.

Its subcellular location is the cell membrane. Functionally, endoribonuclease that initiates mRNA decay. The protein is Ribonuclease Y of Sulfurimonas denitrificans (strain ATCC 33889 / DSM 1251) (Thiomicrospira denitrificans (strain ATCC 33889 / DSM 1251)).